We begin with the raw amino-acid sequence, 258 residues long: F-box/LRR-repeat protein 25 (258 aa).

The F-box domain occupies 27–76; the sequence is SDSISNLPDEILHHILSFIPETNLVIRTSVLSKRWRHVWSKTPHLSFEWL. 4 LRR repeats span residues 101 to 130, 136 to 161, 177 to 202, and 224 to 249; these read CTSYSYEAGHVHSSIEFAMSHNVDNLSLAF, CNKFPDFFYTSSSLKRVELRSASLTP, RCNLSDKSFLKILSGCPILESLSLKF, and RRSCFREPMQSMQIVAPHIHYLRLRD.

This Arabidopsis thaliana (Mouse-ear cress) protein is F-box/LRR-repeat protein 25 (FBL25).